The chain runs to 287 residues: Probable glucose uptake protein GlcU (287 aa).

A run of 9 helical transmembrane segments spans residues 7–29 (LIAL…VGGG), 34–56 (IRGT…FAKF), 58–75 (NPTV…WAFG), 114–136 (WSSM…GVAL), 156–178 (MGIL…IFGV), 183–202 (ALFF…SMNH), 209–228 (TALN…FMFY), 233–255 (VGVA…GGIF), and 267–286 (TGIW…LGNL).

It belongs to the GRP transporter (TC 2.A.7.5) family.

The protein resides in the cell membrane. In terms of biological role, involved in the uptake of glucose. The chain is Probable glucose uptake protein GlcU (glcU) from Staphylococcus aureus (strain COL).